The sequence spans 134 residues: Small ribosomal subunit protein uS11 (134 aa).

Belongs to the universal ribosomal protein uS11 family. Part of the 30S ribosomal subunit. Interacts with proteins S7 and S18. Binds to IF-3.

Functionally, located on the platform of the 30S subunit, it bridges several disparate RNA helices of the 16S rRNA. Forms part of the Shine-Dalgarno cleft in the 70S ribosome. This chain is Small ribosomal subunit protein uS11, found in Herminiimonas arsenicoxydans.